Consider the following 758-residue polypeptide: Glucocorticoid receptor (758 aa).

2 disordered regions span residues 1–61 (MDPG…SANG) and 349–382 (GMSSSSFPVGFSSPKARPEASGSASSAPAKPSGP). Positions 1–386 (MDPGGLKHSK…AKPSGPTHKI (386 aa)) are modulating. Residues 26 to 42 (GSFSGDTGGSKSTTSTS) are compositionally biased toward low complexity. 2 NR C4-type zinc fingers span residues 387-407 (CLVCSDEASGCHYGVLTCGSC) and 432-456 (CAGRNDCIIDKIRRKNCPACRFRKC). The nuclear receptor DNA-binding region spans 387 to 461 (CLVCSDEASG…RFRKCLQAGM (75 aa)). The interval 462 to 498 (NLEARKNKKLIRLKGQQTTMEPNPPPPDERACALIPK) is hinge. Residues 499–733 (SMPQLVPTML…FPEMLAEIIS (235 aa)) form the NR LBD domain.

The protein belongs to the nuclear hormone receptor family. NR3 subfamily. As to quaternary structure, heteromultimeric cytoplasmic complex with HSP90AA1, HSPA1A/HSPA1B, and FKBP5 or another immunophilin such as PPID, STIP1, or the immunophilin homolog PPP5C. Upon ligand binding FKBP5 dissociates from the complex and FKBP4 takes its place, thereby linking the complex to dynein and mediating transport to the nucleus, where the complex dissociates. Directly interacts with UNC45A. Binds to DNA as a homodimer, and as heterodimer with NR3C2 or the retinoid X receptor. Binds STAT5A and STAT5B homodimers and heterodimers. Interacts with NRIP1, POU2F1, POU2F2 and TRIM28. Interacts with several coactivator complexes, including the SMARCA4 complex, CREBBP/EP300, TADA2L (Ada complex) and p160 coactivators such as NCOA2 and NCOA6. Interaction with BAG1 inhibits transactivation. Interacts with HEXIM1, PELP1 and TGFB1I1. Interacts with NCOA1, NCOA3, SMARCA4, SMARCC1, SMARCD1, and SMARCE1. Phosphorylated in the absence of hormone; becomes hyperphosphorylated in the presence of glucocorticoids. May be dephosphorylated by PPP5C, attenuates NR3C1 action. As to expression, isoform 1 is expressed in all tissues tested including liver, gills, intestine, skeletal muscle, kidney, heart, spleen, stomach, brain, pituitary, ovary, testis, skin and bladder. Isoform 2 is found only in testis.

The protein resides in the cytoplasm. The protein localises to the nucleus. It localises to the mitochondrion. Its subcellular location is the cytoskeleton. It is found in the spindle. The protein resides in the microtubule organizing center. The protein localises to the centrosome. Its function is as follows. Receptor for glucocorticoids (GC). Has a dual mode of action: as a transcription factor that binds to glucocorticoid response elements (GRE), both for nuclear and mitochondrial DNA, and as a modulator of other transcription factors. Affects inflammatory responses, cellular proliferation and differentiation in target tissues. Involved in chromatin remodeling. Plays a role in rapid mRNA degradation by binding to the 5' UTR of target mRNAs and interacting with PNRC2 in a ligand-dependent manner which recruits the RNA helicase UPF1 and the mRNA-decapping enzyme DCP1A, leading to RNA decay. Could act as a coactivator for STAT5-dependent transcription upon growth hormone (GH) stimulation and could reveal an essential role of hepatic GR in the control of body growth. Mediates glucocorticoid-induced apoptosis. Promotes accurate chromosome segregation during mitosis. May act as a tumor suppressor. May play a negative role in adipogenesis through the regulation of lipolytic and antilipogenic gene expression. This Oncorhynchus mykiss (Rainbow trout) protein is Glucocorticoid receptor (nr3c1).